A 926-amino-acid polypeptide reads, in one-letter code: Sperm-associated antigen 1 (926 aa).

TPR repeat units follow at residues 209–242 (ATRE…LPTV), 244–275 (AYNN…EPGN), and 276–309 (VKAL…EPDN). Residues 318–452 (EVERDLKNSE…ENPAGLKSQG (135 aa)) form a disordered region. Phosphoserine is present on residues serine 347 and serine 354. A compositionally biased stretch (basic and acidic residues) spans 352–368 (GKSGRKHEDGGGDKKPA). Residues 369-379 (EPAGAARAAQP) show a composition bias toward low complexity. Position 423 is a phosphoserine (serine 423). Residues 428 to 441 (AGGGATGHPGGGQG) are compositionally biased toward gly residues. 6 TPR repeats span residues 445 to 478 (PAGL…LEPA), 487 to 520 (SILY…HPFS), 522 to 554 (KPLL…DCGL), 623 to 656 (FKAL…NNKE), 657 to 690 (CAIY…ADGN), and 692 to 724 (KAFY…DPSI). Composition is skewed to basic and acidic residues over residues 758–769 (IQEVNEGKEEPG) and 784–799 (KGGK…EKLP). A disordered region spans residues 758–801 (IQEVNEGKEEPGRPAGEVSMGCLASEKGGKSSRSPEDPEKLPIA). 781-788 (ASEKGGKS) contributes to the GTP binding site. Serine 791 bears the Phosphoserine mark.

As to expression, present in most tissues, including lung, with the strongest expression in brain, colon, kidney, and testis. In sperm and testis, detected in particular in pachytene primary spermatocytes. Up-regulated in pancreatic tumor tissues and not in normal pancreatic tissue.

Its subcellular location is the cytoplasm. The protein resides in the dynein axonemal particle. Its function is as follows. May play a role in the cytoplasmic assembly of the ciliary dynein arms. May play a role in fertilization. Binds GTP and has GTPase activity. The chain is Sperm-associated antigen 1 (SPAG1) from Homo sapiens (Human).